The chain runs to 82 residues: Cytochrome b-c1 complex subunit 8 (82 aa).

The Mitochondrial matrix portion of the chain corresponds to 1–43; the sequence is MGREFGNLARIRHVISYSLSPFEQRAFPSYFSKGIPNVLRRTR. At Ser-16 the chain carries Phosphoserine. At Lys-33 the chain carries N6-acetyllysine; alternate. Lys-33 is subject to N6-succinyllysine; alternate. A helical membrane pass occupies residues 44-62; that stretch reads ERILRVAPPFVVVYLIYTW. The Mitochondrial intermembrane segment spans residues 63–82; that stretch reads GNQEFEQSKRKNPAMYENDK.

The protein belongs to the UQCRQ/QCR8 family. As to quaternary structure, component of the ubiquinol-cytochrome c oxidoreductase (cytochrome b-c1 complex, complex III, CIII), a multisubunit enzyme composed of 11 subunits. The complex is composed of 3 respiratory subunits cytochrome b, cytochrome c1 and Rieske protein UQCRFS1, 2 core protein subunits UQCRC1/QCR1 and UQCRC2/QCR2, and 6 low-molecular weight protein subunits UQCRH/QCR6, UQCRB/QCR7, UQCRQ/QCR8, UQCR10/QCR9, UQCR11/QCR10 and subunit 9, the cleavage product of Rieske protein UQCRFS1. The complex exists as an obligatory dimer and forms supercomplexes (SCs) in the inner mitochondrial membrane with NADH-ubiquinone oxidoreductase (complex I, CI) and cytochrome c oxidase (complex IV, CIV), resulting in different assemblies (supercomplex SCI(1)III(2)IV(1) and megacomplex MCI(2)III(2)IV(2)). Interacts with UQCC6.

The protein resides in the mitochondrion inner membrane. In terms of biological role, component of the ubiquinol-cytochrome c oxidoreductase, a multisubunit transmembrane complex that is part of the mitochondrial electron transport chain which drives oxidative phosphorylation. The respiratory chain contains 3 multisubunit complexes succinate dehydrogenase (complex II, CII), ubiquinol-cytochrome c oxidoreductase (cytochrome b-c1 complex, complex III, CIII) and cytochrome c oxidase (complex IV, CIV), that cooperate to transfer electrons derived from NADH and succinate to molecular oxygen, creating an electrochemical gradient over the inner membrane that drives transmembrane transport and the ATP synthase. The cytochrome b-c1 complex catalyzes electron transfer from ubiquinol to cytochrome c, linking this redox reaction to translocation of protons across the mitochondrial inner membrane, with protons being carried across the membrane as hydrogens on the quinol. In the process called Q cycle, 2 protons are consumed from the matrix, 4 protons are released into the intermembrane space and 2 electrons are passed to cytochrome c. This is Cytochrome b-c1 complex subunit 8 (Uqcrq) from Mus musculus (Mouse).